The following is a 203-amino-acid chain: Putative 3-methyladenine DNA glycosylase (203 aa).

It belongs to the DNA glycosylase MPG family.

This is Putative 3-methyladenine DNA glycosylase from Clostridium beijerinckii (strain ATCC 51743 / NCIMB 8052) (Clostridium acetobutylicum).